The primary structure comprises 331 residues: UDP-xylose and UDP-N-acetylglucosamine transporter (331 aa).

Transmembrane regions (helical) follow at residues 5–25 (FAVT…ELLV), 30–50 (GCGN…GFIF), 59–79 (PQIP…VSVI), 92–112 (LHMI…IIIL), 122–142 (LSIV…AKQV), 153–173 (GVYA…ALLM), 201–221 (CLPL…AVLF), 238–260 (VMWF…VFIL), 267–289 (LTVT…LYFQ), and 301–321 (AVVF…PAAF).

The protein belongs to the nucleotide-sugar transporter family. SLC35B subfamily.

The protein localises to the golgi apparatus membrane. In terms of biological role, sugar transporter that specifically mediates the transport of UDP-xylose (UDP-Xyl) and UDP-N-acetylglucosamine (UDP-GlcNAc) from cytosol into Golgi. This Danio rerio (Zebrafish) protein is UDP-xylose and UDP-N-acetylglucosamine transporter (slc35b4).